A 406-amino-acid chain; its full sequence is Phosphopentomutase (406 aa).

Mn(2+) contacts are provided by D10, D305, H310, D346, H347, and H358.

Belongs to the phosphopentomutase family. Requires Mn(2+) as cofactor.

It is found in the cytoplasm. The catalysed reaction is 2-deoxy-alpha-D-ribose 1-phosphate = 2-deoxy-D-ribose 5-phosphate. It carries out the reaction alpha-D-ribose 1-phosphate = D-ribose 5-phosphate. It functions in the pathway carbohydrate degradation; 2-deoxy-D-ribose 1-phosphate degradation; D-glyceraldehyde 3-phosphate and acetaldehyde from 2-deoxy-alpha-D-ribose 1-phosphate: step 1/2. In terms of biological role, isomerase that catalyzes the conversion of deoxy-ribose 1-phosphate (dRib-1-P) and ribose 1-phosphate (Rib-1-P) to deoxy-ribose 5-phosphate (dRib-5-P) and ribose 5-phosphate (Rib-5-P), respectively. The protein is Phosphopentomutase of Sinorhizobium medicae (strain WSM419) (Ensifer medicae).